Consider the following 418-residue polypeptide: UPF0261 protein BMEII0128 (418 aa).

Belongs to the UPF0261 family.

The chain is UPF0261 protein BMEII0128 from Brucella melitensis biotype 1 (strain ATCC 23456 / CCUG 17765 / NCTC 10094 / 16M).